We begin with the raw amino-acid sequence, 1430 residues long: Transport and Golgi organization protein 1 (1430 aa).

A signal peptide spans 1–34 (MRLTNEKATMQPQLSDLALVLGLLICCLPTLTWA). Residues 35 to 796 (ATLSDKRLCA…ADKLVDHSQL (762 aa)) are Extracellular-facing. Positions 50-112 (QIISMGIAKI…NKDFIMEKKI (63 aa)) constitute an SH3 domain. 5 disordered regions span residues 253 to 272 (QEEP…PPLP), 284 to 303 (DFDY…SQDN), 318 to 362 (ESIE…SLPT), 445 to 524 (SDAE…DQQK), and 568 to 673 (EEAE…TDNH). The segment covering 284-296 (DFDYGDDETDDDS) has biased composition (acidic residues). Composition is skewed to basic and acidic residues over residues 331–357 (KKTD…KQED), 497–524 (LQEE…DQQK), and 568–588 (EEAE…RSSE). Positions 494–620 (YKQLQEEQEK…QSNEIVDNNN (127 aa)) form a coiled coil. Over residues 594 to 621 (LSVQEANMQQLNDSVDSQSNEIVDNNNR) the composition is skewed to polar residues. Low complexity predominate over residues 640-651 (HPSTASHTTPTP). Residues 797 to 817 (LLCVVIAAISSLFFMFAYYCF) traverse the membrane as a helical segment. Residues 818–1430 (CNSSQEGALL…SATSRPYSEV (613 aa)) are Cytoplasmic-facing. S865 and S868 each carry phosphoserine. Positions 869–1245 (NDMVADLKKQ…SLRRKLTTMA (377 aa)) form a coiled coil. The segment covering 1105–1114 (SQLQQSSQDV) has biased composition (low complexity). 2 disordered regions span residues 1105 to 1126 (SQLQ…QSER) and 1312 to 1430 (LPPT…YSEV). Over residues 1115–1126 (EQLKQDFNQSER) the composition is skewed to basic and acidic residues. The segment covering 1321–1334 (RPPPLGRMRSPPPS) has biased composition (pro residues). Basic and acidic residues predominate over residues 1336-1346 (RGDRDRERYSD). 2 positions are modified to phosphoserine: S1345 and S1348. The segment covering 1348–1361 (SDYDDYDDDEEDDR) has biased composition (acidic residues). Over residues 1364-1380 (DRRRRHSGSWGRRHRGS) the composition is skewed to basic residues. The span at 1387 to 1402 (TYRSLSPSDSRYNYND) shows a compositional bias: polar residues. A phosphoserine mark is found at S1390 and S1392. Over residues 1408–1417 (SPPPSPPPVP) the composition is skewed to pro residues. A compositionally biased stretch (polar residues) spans 1420 to 1430 (RSATSRPYSEV).

Belongs to the MIA/OTOR family. Tango1 subfamily.

The protein resides in the golgi apparatus membrane. It is found in the golgi apparatus. The protein localises to the trans-Golgi network. Its function is as follows. Required for protein secretion. May participate in cargo loading by binding to COPII coat subunits and guiding SH3-bound proteins into a growing carrier. At basal transitional ER sites in follicle epithelial cells, mediates the exit of basal membrane protein such as vkg, LanB1 and Trol, from the endoplasmic reticulum (ER) to basal Golgi clusters. The sequence is that of Transport and Golgi organization protein 1 from Drosophila melanogaster (Fruit fly).